A 392-amino-acid polypeptide reads, in one-letter code: Monooxygenase AgnR1 (392 aa).

The signal sequence occupies residues 1–20 (MSAPQKCAAVVVGAGPAGLA). The N-linked (GlcNAc...) asparagine glycan is linked to N134.

Functionally, monooxygenase; part of the gene cluster that mediates the biosynthesis of agnestins, dihydroxy-xanthone metabolites. The pathway begins with the assembly and cyclization of atrochrysone thioester by the non-reducing polyketide synthase Agnpks1. The atrochrysone carboxyl ACP thioesterase AgnL7 then breaks the thioester bond and releases the atrochrysone carboxylic acid as the first enzyme-free intermediate. The decarboxylase AgnL1 then catalyzes the concerted decarboxylation-elimination required to convert atochrysone carboxylic acid into emodin anthrone, which is further oxidized to emodin by the anthrone oxygenase AgnL2. Emodin then undergoes reduction catalyzed by the oxidoreductase AgnL4 to yield the dihydroquinone tautomer which is the substrate for reduction by the short chain dehydrogenase AgnL6 reduction to produce hydroxyketone, followed by AgnL8 dehydration and likely spontaneous autoxidation to chrysophanol. Baeyer-Villiger oxidation by the oxidase AgnL3 leads to monodictyphenone via cleavage of the C-10/C-10a bond of chrysophanol. Alternative cleavage at the C-4a/C-10 bond of chrysophanol also leads to the formation some cephalone F. Further conversion to agnestins A and B, requires reduction to dihydro-monodictyphenone, oxidation to agnestin C probably via an epoxide, and rearrangement to either agnestin A or agnestin B directly, although agnestin A or agnestin B can also interconvert. Within the cluster, AgnR1 is the only unassigned oxidoreductase present which could be involved in this conversion. However, AgnR1 seems not to be involved in this step, and thus genes involved in the proposed oxidation/reduction may be located elsewhere on the genome. Further agnestin A derivatives are probably formed by spontaneous decarboxylations, dehydrations and methanolysis reactions. In Paecilomyces divaricatus (Penicillium divaricatum), this protein is Monooxygenase AgnR1.